The primary structure comprises 239 residues: Pyridoxine 5'-phosphate synthase (239 aa).

3-amino-2-oxopropyl phosphate is bound at residue Asn7. Asp9 to His10 is a binding site for 1-deoxy-D-xylulose 5-phosphate. Arg18 is a binding site for 3-amino-2-oxopropyl phosphate. His43 functions as the Proton acceptor in the catalytic mechanism. 1-deoxy-D-xylulose 5-phosphate contacts are provided by Arg45 and His50. The active-site Proton acceptor is the Glu70. Thr100 contacts 1-deoxy-D-xylulose 5-phosphate. The Proton donor role is filled by His191. 3-amino-2-oxopropyl phosphate is bound by residues Gly192 and Gly213–His214.

Belongs to the PNP synthase family. Homooctamer; tetramer of dimers.

It is found in the cytoplasm. The enzyme catalyses 3-amino-2-oxopropyl phosphate + 1-deoxy-D-xylulose 5-phosphate = pyridoxine 5'-phosphate + phosphate + 2 H2O + H(+). It functions in the pathway cofactor biosynthesis; pyridoxine 5'-phosphate biosynthesis; pyridoxine 5'-phosphate from D-erythrose 4-phosphate: step 5/5. Functionally, catalyzes the complicated ring closure reaction between the two acyclic compounds 1-deoxy-D-xylulose-5-phosphate (DXP) and 3-amino-2-oxopropyl phosphate (1-amino-acetone-3-phosphate or AAP) to form pyridoxine 5'-phosphate (PNP) and inorganic phosphate. This is Pyridoxine 5'-phosphate synthase from Geobacter sp. (strain M21).